The sequence spans 310 residues: Small ribosomal subunit biogenesis GTPase RsgA (310 aa).

The CP-type G domain maps to 77–236 (KNELKRPNIA…IADTPGFSKL (160 aa)). Residues 126-129 (SKID) and 179-187 (GQTGVGKST) each bind GTP. Zn(2+) is bound by residues C260, C266, H268, and C274.

The protein belongs to the TRAFAC class YlqF/YawG GTPase family. RsgA subfamily. As to quaternary structure, monomer. Associates with 30S ribosomal subunit, binds 16S rRNA. Zn(2+) serves as cofactor.

It is found in the cytoplasm. In terms of biological role, one of several proteins that assist in the late maturation steps of the functional core of the 30S ribosomal subunit. Helps release RbfA from mature subunits. May play a role in the assembly of ribosomal proteins into the subunit. Circularly permuted GTPase that catalyzes slow GTP hydrolysis, GTPase activity is stimulated by the 30S ribosomal subunit. This chain is Small ribosomal subunit biogenesis GTPase RsgA, found in Phytoplasma australiense.